Consider the following 378-residue polypeptide: Protein RecA (378 aa).

79–86 (GPESSGKT) contributes to the ATP binding site.

This sequence belongs to the RecA family.

It is found in the cytoplasm. Can catalyze the hydrolysis of ATP in the presence of single-stranded DNA, the ATP-dependent uptake of single-stranded DNA by duplex DNA, and the ATP-dependent hybridization of homologous single-stranded DNAs. It interacts with LexA causing its activation and leading to its autocatalytic cleavage. The sequence is that of Protein RecA from Streptococcus pyogenes serotype M2 (strain MGAS10270).